The chain runs to 479 residues: Neuronal acetylcholine receptor subunit alpha-9 (479 aa).

The N-terminal stretch at 1-25 (MNRPHSCLSFCWMYFAASGIRAVET) is a signal peptide. Over 26–237 (ANGKYAQKLF…TFTLLLKRRS (212 aa)) the chain is Extracellular. A glycan (N-linked (GlcNAc...) asparagine) is linked at asparagine 57. A disulfide bridge connects residues cysteine 155 and cysteine 169. N-linked (GlcNAc...) asparagine glycosylation occurs at asparagine 170. Positions 191 and 193 each coordinate Na(+). A disulfide bond links cysteine 219 and cysteine 220. Helical transmembrane passes span 238 to 262 (SFYI…FYLP), 269 to 287 (VSLG…LMVA), and 302 to 323 (YYIA…VMNI). Residues 324 to 457 (HFCGAEARPV…WKKVAKVIDR (134 aa)) are Cytoplasmic-facing. Residues 458 to 476 (FFMWIFFAMVFVMTVLIIA) form a helical membrane-spanning segment.

It belongs to the ligand-gated ion channel (TC 1.A.9) family. Acetylcholine receptor (TC 1.A.9.1) subfamily. Alpha-9/CHRNA9 sub-subfamily. Forms homo- or heterooligomeric channels in conjunction with CHRNA10. The native outer hair cell receptor may be composed of CHRNA9:CHRNA10 heterooligomers. Found in the stoichiometric form (CHRNA9)2:(CHRNA10)3. In terms of tissue distribution, detected in the nasal epithelium, in the outer hair cells of the cochlea, in the pars tuberalis of the hypophysis, and in the developing muscle of the tongue. Also expressed in the neurons of dorsal root ganglia.

It is found in the synaptic cell membrane. The protein localises to the cell membrane. It carries out the reaction Ca(2+)(in) = Ca(2+)(out). It catalyses the reaction Mg(2+)(in) = Mg(2+)(out). The catalysed reaction is K(+)(in) = K(+)(out). The enzyme catalyses Na(+)(in) = Na(+)(out). Its activity is regulated as follows. Activated by a myriad of ligands such as acetylcholine. AChR activity is inhibited by the antagonist alpha-conotoxins RgIA and GeXXA, small disulfide-constrained peptides from cone snails. Its function is as follows. Component of neuronal acetylcholine receptors (nAChRs) that function as pentameric, ligand-gated cation channels with high calcium permeability among other activities. nAChRs are excitatory neurotrasnmitter receptors formed by a collection of nAChR subunits known to mediate synaptic transmission in the nervous system and the neuromuscular junction. Each nAchR subunit confers differential attributes to channel properties, including activation, deactivation and desensitization kinetics, pH sensitivity, cation permeability, and binding to allosteric modulators. Forms either homopentamers or heteropentamers with CHRNA10. Expressed in the inner ear, in sympathetic neurons and in other non-neuronal cells, such as skin keratinocytes and lymphocytes. nAChR formed by CHRNA9:CHRNA10 mediate central nervous system control of auditory and vestibular sensory processing. The channel is permeable to a range of divalent cations including calcium, the influx of which may activate a potassium current which hyperpolarizes the cell membrane. In the ear, mediates synaptic transmission between efferent olivocochlear fibers and hair cells of the cochlea, this may lead to a reduction in basilar membrane motion, altering the activity of auditory nerve fibers and reducing the range of dynamic hearing. This may protect against acoustic trauma. May also regulate keratinocyte adhesion. In Rattus norvegicus (Rat), this protein is Neuronal acetylcholine receptor subunit alpha-9 (Chrna9).